Here is a 201-residue protein sequence, read N- to C-terminus: Putative Ras-related protein Rab-1C (201 aa).

GTP-binding positions include 15–23, 33–40, and 63–67; these read GDSGVGKSC, YTESYIST, and DTAGQ. The Effector region motif lies at 37–45; the sequence is YISTIGVDF. Ser-76 is subject to (Microbial infection) O-(2-cholinephosphoryl)serine. GTP is bound by residues 121-124 and 151-153; these read NKSD and SAK. The interval 174-201 is disordered; it reads GPGAASGGERPNLKIDSTPVKPAGGGCC. S-geranylgeranyl cysteine attachment occurs at residues Cys-200 and Cys-201.

Belongs to the small GTPase superfamily. Rab family. In terms of processing, (Microbial infection) Phosphocholinated at Ser-76 by L.pneumophila AnkX, leading to displace GDP dissociation inhibitors (GDI). Both GDP-bound and GTP-bound forms can be phosphocholinated. Dephosphocholinated by L.pneumophila Lem3, restoring accessibility to L.pneumophila GTPase effector LepB. (Microbial infection) Glycosylated by S.typhimurium protein Ssek3: arginine GlcNAcylation prevents GTPase activity, thereby disrupting vesicular protein transport from the endoplasmic reticulum (ER) to the Golgi compartment.

The protein resides in the membrane. It is found in the cytoplasm. It catalyses the reaction GTP + H2O = GDP + phosphate + H(+). Functionally, protein transport. Probably involved in vesicular traffic. The polypeptide is Putative Ras-related protein Rab-1C (RAB1C) (Homo sapiens (Human)).